Here is a 334-residue protein sequence, read N- to C-terminus: Methionine import ATP-binding protein MetN (334 aa).

The ABC transporter domain occupies 7–246 (VEFRSVSKVF…PRSAPARAFV (240 aa)). ATP is bound at residue 43–50 (GYSGAGKS).

It belongs to the ABC transporter superfamily. Methionine importer (TC 3.A.1.24) family. The complex is composed of two ATP-binding proteins (MetN), two transmembrane proteins (MetI) and a solute-binding protein (MetQ).

It localises to the cell membrane. The catalysed reaction is L-methionine(out) + ATP + H2O = L-methionine(in) + ADP + phosphate + H(+). It catalyses the reaction D-methionine(out) + ATP + H2O = D-methionine(in) + ADP + phosphate + H(+). In terms of biological role, part of the ABC transporter complex MetNIQ involved in methionine import. Responsible for energy coupling to the transport system. The protein is Methionine import ATP-binding protein MetN of Nocardia farcinica (strain IFM 10152).